A 616-amino-acid chain; its full sequence is Chaperone protein HscA (616 aa).

This sequence belongs to the heat shock protein 70 family.

Its function is as follows. Chaperone involved in the maturation of iron-sulfur cluster-containing proteins. Has a low intrinsic ATPase activity which is markedly stimulated by HscB. Involved in the maturation of IscU. This Escherichia coli O7:K1 (strain IAI39 / ExPEC) protein is Chaperone protein HscA.